A 276-amino-acid polypeptide reads, in one-letter code: NH(3)-dependent NAD(+) synthetase (276 aa).

43-50 (GISGGVDS) serves as a coordination point for ATP. Aspartate 49 serves as a coordination point for Mg(2+). Arginine 146 provides a ligand contact to deamido-NAD(+). Threonine 166 contributes to the ATP binding site. Mg(2+) is bound at residue glutamate 171. The deamido-NAD(+) site is built by lysine 179 and aspartate 186. ATP is bound by residues lysine 195 and threonine 217. 266–267 (HK) contributes to the deamido-NAD(+) binding site.

Belongs to the NAD synthetase family. As to quaternary structure, homodimer.

It carries out the reaction deamido-NAD(+) + NH4(+) + ATP = AMP + diphosphate + NAD(+) + H(+). Its pathway is cofactor biosynthesis; NAD(+) biosynthesis; NAD(+) from deamido-NAD(+) (ammonia route): step 1/1. Catalyzes the ATP-dependent amidation of deamido-NAD to form NAD. Uses ammonia as a nitrogen source. The protein is NH(3)-dependent NAD(+) synthetase of Shewanella pealeana (strain ATCC 700345 / ANG-SQ1).